We begin with the raw amino-acid sequence, 172 residues long: Biogenesis of lysosome-related organelles complex 1 subunit 6 (172 aa).

A compositionally biased stretch (pro residues) spans 1 to 10; the sequence is MSVPEPPPPD. 2 disordered regions span residues 1–37 and 141–172; these read MSVP…PDEG and QKRQ…AKRT. A coiled-coil region spans residues 63 to 167; sequence DLQRSKRALQ…FEREKQLTAK (105 aa). Residues 143–164 are compositionally biased toward basic and acidic residues; the sequence is RQREELEREQQREKEFEREKQL.

The protein belongs to the BLOC1S6 family. In terms of assembly, octamer composed of one copy each BLOC1S1, BLOC1S2, BLOC1S3, BLOC1S4, BLOC1S5, BLOC1S6, DTNBP1/BLOC1S7 and SNAPIN/BLOC1S8. Interacts with SNAP47. Homodimer. Component of the biogenesis of lysosome-related organelles complex 1 (BLOC-1) composed of BLOC1S1, BLOC1S2, BLOC1S3, BLOC1S4, BLOC1S5, BLOC1S6, DTNBP1/BLOC1S7 and SNAPIN/BLOC1S8. Interacts with BLOC1S4, BLOC1S5, DTNBP1/BLOC1S7, F-actin, SNAP25 isoform 1 and STX12. Post-translationally, phosphorylated. In terms of tissue distribution, expressed in liver, kidney and spleen (at protein level). Ubiquitously expressed, with the highest expression levels observed in brain, heart, liver and kidney.

Its subcellular location is the cytoplasm. It localises to the membrane. Its function is as follows. Component of the BLOC-1 complex, a complex that is required for normal biogenesis of lysosome-related organelles (LRO), such as platelet dense granules and melanosomes. In concert with the AP-3 complex, the BLOC-1 complex is required to target membrane protein cargos into vesicles assembled at cell bodies for delivery into neurites and nerve terminals. The BLOC-1 complex, in association with SNARE proteins, is also proposed to be involved in neurite extension. May play a role in intracellular vesicle trafficking, particularly in the vesicle-docking and fusion process. The protein is Biogenesis of lysosome-related organelles complex 1 subunit 6 (Bloc1s6) of Mus musculus (Mouse).